The sequence spans 264 residues: Small ribosomal subunit protein eS1 (264 aa).

An N6-acetyllysine; alternate modification is found at K34. K34 participates in a covalent cross-link: Glycyl lysine isopeptide (Lys-Gly) (interchain with G-Cter in SUMO2); alternate. An N6-acetyllysine modification is found at K56. The residue at position 155 (Y155) is an ADP-ribosyltyrosine. Residues 233 to 264 are disordered; it reads GEGGSSGKAAGDETGAKVERADGYEPPVQESV. The residue at position 237 (S237) is a Phosphoserine. Basic and acidic residues predominate over residues 242 to 255; the sequence is AGDETGAKVERADG. N6-acetyllysine; alternate is present on K249. K249 is covalently cross-linked (Glycyl lysine isopeptide (Lys-Gly) (interchain with G-Cter in SUMO2); alternate). At Y256 the chain carries Phosphotyrosine. The residue at position 263 (S263) is a Phosphoserine.

Belongs to the eukaryotic ribosomal protein eS1 family. As to quaternary structure, component of the small ribosomal subunit. Mature ribosomes consist of a small (40S) and a large (60S) subunit. The 40S subunit contains about 33 different proteins and 1 molecule of RNA (18S). The 60S subunit contains about 49 different proteins and 3 molecules of RNA (28S, 5.8S and 5S). Identified in a IGF2BP1-dependent mRNP granule complex containing untranslated mRNAs. Binds with high affinity to IPO4. Interacts with DDIT3. Part of the small subunit (SSU) processome, composed of more than 70 proteins and the RNA chaperone small nucleolar RNA (snoRNA) U3. ADP-ribosylated at Tyr-155 by PARP1 in presence of HPF1.

The protein resides in the cytoplasm. It localises to the nucleus. The protein localises to the nucleolus. Component of the small ribosomal subunit. The ribosome is a large ribonucleoprotein complex responsible for the synthesis of proteins in the cell. Part of the small subunit (SSU) processome, first precursor of the small eukaryotic ribosomal subunit. During the assembly of the SSU processome in the nucleolus, many ribosome biogenesis factors, an RNA chaperone and ribosomal proteins associate with the nascent pre-rRNA and work in concert to generate RNA folding, modifications, rearrangements and cleavage as well as targeted degradation of pre-ribosomal RNA by the RNA exosome. May play a role during erythropoiesis through regulation of transcription factor DDIT3. The chain is Small ribosomal subunit protein eS1 (Rps3a) from Mus musculus (Mouse).